We begin with the raw amino-acid sequence, 1046 residues long: uncharacterized protein (1046 aa).

Positions 594-615 (LNSIPSDSSSSGSSRKSSPRGS) are enriched in low complexity. The disordered stretch occupies residues 594-622 (LNSIPSDSSSSGSSRKSSPRGSPNLGEAP).

This is an uncharacterized protein from Invertebrate iridescent virus 6 (IIV-6).